We begin with the raw amino-acid sequence, 368 residues long: tRNA-specific 2-thiouridylase MnmA (368 aa).

Residues 11–18 (GMSGGVDS) and M37 contribute to the ATP site. Residues 97-99 (NPD) are interaction with target base in tRNA. C102 serves as the catalytic Nucleophile. C102 and C199 are joined by a disulfide. ATP is bound at residue G127. The segment at 149–151 (KDQ) is interaction with tRNA. Residue C199 is the Cysteine persulfide intermediate of the active site. Residues 311 to 312 (RY) are interaction with tRNA.

It belongs to the MnmA/TRMU family. In terms of assembly, interacts with TusE.

Its subcellular location is the cytoplasm. It catalyses the reaction S-sulfanyl-L-cysteinyl-[protein] + uridine(34) in tRNA + AH2 + ATP = 2-thiouridine(34) in tRNA + L-cysteinyl-[protein] + A + AMP + diphosphate + H(+). Catalyzes the 2-thiolation of uridine at the wobble position (U34) of tRNA(Lys), tRNA(Glu) and tRNA(Gln), leading to the formation of s(2)U34, the first step of tRNA-mnm(5)s(2)U34 synthesis. Sulfur is provided by IscS, via a sulfur-relay system. Binds ATP and its substrate tRNAs. This chain is tRNA-specific 2-thiouridylase MnmA, found in Shigella boydii serotype 18 (strain CDC 3083-94 / BS512).